A 252-amino-acid chain; its full sequence is Clc-like protein 2 (252 aa).

Helical transmembrane passes span 7–29 (YAIL…TPAW), 91–111 (LFHI…SFCV), 127–147 (VFLV…AVYS), and 173–193 (IALT…VHVL).

This sequence belongs to the Clc family.

The protein resides in the membrane. This Caenorhabditis elegans protein is Clc-like protein 2 (clc-2).